A 1057-amino-acid polypeptide reads, in one-letter code: Carbamoyl phosphate synthase large chain (1057 aa).

The tract at residues 1–401 is carboxyphosphate synthetic domain; that stretch reads MPKRNDIKTI…SLLKAIRSLE (401 aa). ATP contacts are provided by Arg129, Arg169, Gly175, Gly176, Lys208, Ile210, Glu215, Gly241, Ile242, His243, Gln284, and Glu298. Positions 133–327 constitute an ATP-grasp 1 domain; it reads RTLMNDLNVP…IAKLAAKIAV (195 aa). Residues Gln284, Glu298, and Asn300 each coordinate Mg(2+). Mn(2+) contacts are provided by Gln284, Glu298, and Asn300. The segment at 402–546 is oligomerization domain; sequence YGVHHLGLPN…YGTYETENES (145 aa). The interval 547–929 is carbamoyl phosphate synthetic domain; the sequence is IVTDKEKILV…ALFKGLTGSG (383 aa). The ATP-grasp 2 domain occupies 671–861; the sequence is EALLRKINVP…MAQLAMRAII (191 aa). Arg707, Arg746, Leu748, Glu752, Gly777, Val778, His779, Ser780, Gln820, and Glu832 together coordinate ATP. Mg(2+)-binding residues include Gln820, Glu832, and Asn834. 3 residues coordinate Mn(2+): Gln820, Glu832, and Asn834. One can recognise an MGS-like domain in the interval 930–1057; sequence VEVKDHGTVL…ESMTFTMRQM (128 aa). The tract at residues 930-1057 is allosteric domain; that stretch reads VEVKDHGTVL…ESMTFTMRQM (128 aa).

This sequence belongs to the CarB family. As to quaternary structure, composed of two chains; the small (or glutamine) chain promotes the hydrolysis of glutamine to ammonia, which is used by the large (or ammonia) chain to synthesize carbamoyl phosphate. Tetramer of heterodimers (alpha,beta)4. It depends on Mg(2+) as a cofactor. Requires Mn(2+) as cofactor.

It carries out the reaction hydrogencarbonate + L-glutamine + 2 ATP + H2O = carbamoyl phosphate + L-glutamate + 2 ADP + phosphate + 2 H(+). The catalysed reaction is hydrogencarbonate + NH4(+) + 2 ATP = carbamoyl phosphate + 2 ADP + phosphate + 2 H(+). It functions in the pathway amino-acid biosynthesis; L-arginine biosynthesis; carbamoyl phosphate from bicarbonate: step 1/1. Its pathway is pyrimidine metabolism; UMP biosynthesis via de novo pathway; (S)-dihydroorotate from bicarbonate: step 1/3. Large subunit of the glutamine-dependent carbamoyl phosphate synthetase (CPSase). CPSase catalyzes the formation of carbamoyl phosphate from the ammonia moiety of glutamine, carbonate, and phosphate donated by ATP, constituting the first step of 2 biosynthetic pathways, one leading to arginine and/or urea and the other to pyrimidine nucleotides. The large subunit (synthetase) binds the substrates ammonia (free or transferred from glutamine from the small subunit), hydrogencarbonate and ATP and carries out an ATP-coupled ligase reaction, activating hydrogencarbonate by forming carboxy phosphate which reacts with ammonia to form carbamoyl phosphate. The protein is Carbamoyl phosphate synthase large chain of Staphylococcus aureus (strain MRSA252).